The following is a 1542-amino-acid chain: ABC multidrug transporter AFR1 (1542 aa).

Disordered stretches follow at residues 1–84 (MSAA…LPAD) and 118–141 (SQQS…FSRK). The span at 18–41 (TATTQNPSGLANSQVTSDPVPSAT) shows a compositional bias: polar residues. Residues 60–69 (DKSVDAEKVE) are compositionally biased toward basic and acidic residues. 2 N-linked (GlcNAc...) asparagine glycosylation sites follow: Asn-207 and Asn-397. Residues 221-473 (LKVLGIFGVN…MIGLGYRDLP (253 aa)) form the ABC transporter 1 domain. A run of 5 helical transmembrane segments spans residues 584-604 (FGIS…GSVY), 618-638 (GGLL…ELPS), 669-689 (VPYN…MGGL), 694-714 (GAFF…SAFF), and 726-746 (VAAR…GYMI). N-linked (GlcNAc...) asparagine glycosylation is present at Asn-822. A helical transmembrane segment spans residues 844 to 864 (FGILVGFFAFFMFLQMMFIEY). The ABC transporter 2 domain maps to 917 to 1159 (FTWEGLNYTV…VLIDYLERNG (243 aa)). An N-linked (GlcNAc...) asparagine glycan is attached at Asn-923. 953–960 (GASGAGKT) provides a ligand contact to ATP. The next 6 membrane-spanning stretches (helical) occupy residues 1253-1273 (WTRL…FLQL), 1284-1304 (VFAI…IEPQ), 1335-1355 (MPYS…GVGF), 1365-1385 (FFLM…AVAA), 1390-1410 (ILIA…FCGV), and 1516-1536 (FGIF…AARF).

Belongs to the ABC transporter superfamily. ABCG family. PDR (TC 3.A.1.205) subfamily.

The protein resides in the cell membrane. It carries out the reaction itraconazole(in) + ATP + H2O = itraconazole(out) + ADP + phosphate + H(+). The enzyme catalyses voriconazole(in) + ATP + H2O = voriconazole(out) + ADP + phosphate + H(+). The catalysed reaction is fluconazole(in) + ATP + H2O = fluconazole(out) + ADP + phosphate + H(+). Major pleiotropic ABC efflux transporter that confers resistance to structurally and functionally unrelated compounds including azoles such as fluconazole (FLC), itraconazole (ITC), posaconazole (POS), and voriconazole (VRC). Is also able to efflux the eukaryote protein synthesis inhibitor cycloheximide (CHX). This is ABC multidrug transporter AFR1 from Cryptococcus deuterogattii (strain R265) (Cryptococcus gattii VGII (strain R265)).